A 164-amino-acid polypeptide reads, in one-letter code: Phosphopantetheine adenylyltransferase (164 aa).

Ser-9 lines the substrate pocket. ATP is bound by residues 9 to 10 (SF) and His-17. Residues Lys-41, Ala-78, and Arg-92 each contribute to the substrate site. ATP-binding positions include 93–95 (GLR), Glu-103, and 128–134 (SRPITAT).

Belongs to the bacterial CoaD family. As to quaternary structure, homohexamer. It depends on Mg(2+) as a cofactor.

The protein resides in the cytoplasm. The catalysed reaction is (R)-4'-phosphopantetheine + ATP + H(+) = 3'-dephospho-CoA + diphosphate. The protein operates within cofactor biosynthesis; coenzyme A biosynthesis; CoA from (R)-pantothenate: step 4/5. Functionally, reversibly transfers an adenylyl group from ATP to 4'-phosphopantetheine, yielding dephospho-CoA (dPCoA) and pyrophosphate. In Allorhizobium ampelinum (strain ATCC BAA-846 / DSM 112012 / S4) (Agrobacterium vitis (strain S4)), this protein is Phosphopantetheine adenylyltransferase.